We begin with the raw amino-acid sequence, 116 residues long: U16-barytoxin-Tl1f (116 aa).

Residues 1–20 (MKTIIVFLSLLVLATKFGDA) form the signal peptide. Positions 21-74 (NEGVNQEQMKEVIQNEFREDFLNEMAPMSLLQQLEAIESTLLEKEADRNSRQKR) are excised as a propeptide. Intrachain disulfides connect Cys75–Cys90, Cys82–Cys95, and Cys89–Cys110. N-linked (GlcNAc...) asparagine glycosylation is present at Asn85.

The protein belongs to the neurotoxin 14 (magi-1) family. 06 (ICK-Trit) subfamily. Expressed by the venom gland.

It is found in the secreted. In terms of biological role, ion channel inhibitor. The sequence is that of U16-barytoxin-Tl1f from Trittame loki (Brush-footed trapdoor spider).